A 116-amino-acid chain; its full sequence is Ferredoxin-like protein in nif region (116 aa).

In terms of domain architecture, 4Fe-4S ferredoxin-type spans 2–29 (AYTITSQCISCKLCSSVCPTGAIKIAEN). Residues Cys9, Cys12, Cys15, and Cys19 each coordinate iron-sulfur cluster.

This Nostoc sp. (strain PCC 7120 / SAG 25.82 / UTEX 2576) protein is Ferredoxin-like protein in nif region (fdxN).